We begin with the raw amino-acid sequence, 290 residues long: 4-hydroxybenzoate octaprenyltransferase (290 aa).

The next 8 helical transmembrane spans lie at 21-41, 44-64, 84-104, 106-126, 142-162, 212-232, 235-255, and 267-287; these read IGTL…VKGM, LSIL…GCVI, LATG…LVFC, FILV…AVFL, LFLG…SIEA, IISL…YLSQ, TSYF…CKLI, and FLNN…GIFF.

The protein belongs to the UbiA prenyltransferase family. Mg(2+) is required as a cofactor.

Its subcellular location is the cell inner membrane. The enzyme catalyses all-trans-octaprenyl diphosphate + 4-hydroxybenzoate = 4-hydroxy-3-(all-trans-octaprenyl)benzoate + diphosphate. It participates in cofactor biosynthesis; ubiquinone biosynthesis. Its function is as follows. Catalyzes the prenylation of para-hydroxybenzoate (PHB) with an all-trans polyprenyl group. Mediates the second step in the final reaction sequence of ubiquinone-8 (UQ-8) biosynthesis, which is the condensation of the polyisoprenoid side chain with PHB, generating the first membrane-bound Q intermediate 3-octaprenyl-4-hydroxybenzoate. This is 4-hydroxybenzoate octaprenyltransferase from Pasteurella multocida (strain Pm70).